A 154-amino-acid chain; its full sequence is Nucleoside diphosphate kinase (154 aa).

Residues lysine 12, phenylalanine 60, arginine 88, threonine 94, arginine 105, and asparagine 115 each contribute to the ATP site. Histidine 118 serves as the catalytic Pros-phosphohistidine intermediate.

It belongs to the NDK family. Requires Mg(2+) as cofactor.

It is found in the cytoplasm. The catalysed reaction is a 2'-deoxyribonucleoside 5'-diphosphate + ATP = a 2'-deoxyribonucleoside 5'-triphosphate + ADP. It carries out the reaction a ribonucleoside 5'-diphosphate + ATP = a ribonucleoside 5'-triphosphate + ADP. Its function is as follows. Major role in the synthesis of nucleoside triphosphates other than ATP. The ATP gamma phosphate is transferred to the NDP beta phosphate via a ping-pong mechanism, using a phosphorylated active-site intermediate. This Haloarcula marismortui (strain ATCC 43049 / DSM 3752 / JCM 8966 / VKM B-1809) (Halobacterium marismortui) protein is Nucleoside diphosphate kinase.